The chain runs to 580 residues: Glutamine--tRNA ligase (580 aa).

Positions 41–51 (PEPNGYLHIGH) match the 'HIGH' region motif. ATP contacts are provided by residues 42–44 (EPN) and 48–54 (HIGHAKA). 2 residues coordinate L-glutamine: Asp74 and Tyr218. Residues Thr237, 285–286 (RL), and 293–295 (MSK) contribute to the ATP site. The 'KMSKS' region signature appears at 292-296 (VMSKR).

The protein belongs to the class-I aminoacyl-tRNA synthetase family. In terms of assembly, monomer.

It localises to the cytoplasm. It catalyses the reaction tRNA(Gln) + L-glutamine + ATP = L-glutaminyl-tRNA(Gln) + AMP + diphosphate. In Xylella fastidiosa (strain M12), this protein is Glutamine--tRNA ligase.